The sequence spans 826 residues: Arsenite oxidase subunit AioA (826 aa).

[3Fe-4S] cluster is bound by residues cysteine 22, cysteine 25, and cysteine 29. Substrate is bound by residues histidine 196, glutamate 204, arginine 419, and histidine 423.

The protein belongs to the prokaryotic molybdopterin-containing oxidoreductase family. In terms of assembly, heterodimer consisting of a large and a small subunit. It depends on [3Fe-4S] cluster as a cofactor. Mo-bis(molybdopterin guanine dinucleotide) is required as a cofactor.

The catalysed reaction is 2 oxidized [azurin] + arsenite + H2O = 2 reduced [azurin] + arsenate + 3 H(+). Involved in the detoxification of arsenic. Oxidizes As(III)O3(3-) (arsenite) to the somewhat less toxic As(V)O4(3-) (arsenate). The sequence is that of Arsenite oxidase subunit AioA (aioA) from Herminiimonas arsenicoxydans.